The chain runs to 416 residues: 3-oxoacyl-[acyl-carrier-protein] synthase 1 (416 aa).

The Ketosynthase family 3 (KS3) domain occupies 11 to 415 (FPSVVVTAVT…GHNVALAFGR (405 aa)). Active-site for beta-ketoacyl synthase activity residues include Cys-171, His-311, and His-345. Substrate contacts are provided by His-311 and His-345.

The protein belongs to the thiolase-like superfamily. Beta-ketoacyl-ACP synthases family.

The protein resides in the cytoplasm. It catalyses the reaction an ultra-long-chain mono-unsaturated fatty acyl-[ACP] + malonyl-[ACP] + H(+) = a 3-oxo-ultra-long-chain mono-unsaturated fatty acyl-[ACP] + holo-[ACP] + CO2. Its pathway is lipid metabolism; mycolic acid biosynthesis. Part of the mycobacterial fatty acid elongation system FAS-II, which is involved in mycolic acid biosynthesis. Catalyzes the elongation of long chain acyl-ACP substrates by the addition of two carbons from malonyl-ACP to an acyl acceptor. Involved in the initial extension of the mycolate chain and forms monounsaturated fatty acids that averaged 40 carbons in length. This chain is 3-oxoacyl-[acyl-carrier-protein] synthase 1 (kasA), found in Mycobacterium tuberculosis (strain ATCC 35801 / TMC 107 / Erdman).